Reading from the N-terminus, the 396-residue chain is Acetate kinase (396 aa).

A Mg(2+)-binding site is contributed by Asn-7. Lys-14 serves as a coordination point for ATP. Arg-88 is a substrate binding site. The active-site Proton donor/acceptor is Asp-145. Residues 205–209 (HLGNG), 279–281 (DFR), and 327–331 (GIGEN) contribute to the ATP site. Glu-381 lines the Mg(2+) pocket.

This sequence belongs to the acetokinase family. Homodimer. The cofactor is Mg(2+). Mn(2+) is required as a cofactor.

It is found in the cytoplasm. It catalyses the reaction acetate + ATP = acetyl phosphate + ADP. It participates in metabolic intermediate biosynthesis; acetyl-CoA biosynthesis; acetyl-CoA from acetate: step 1/2. Catalyzes the formation of acetyl phosphate from acetate and ATP. Can also catalyze the reverse reaction. This Campylobacter jejuni (strain RM1221) protein is Acetate kinase.